The sequence spans 494 residues: Transcriptional regulator calD (494 aa).

Its subcellular location is the nucleus. Its function is as follows. Transcription co-regulator that might be involved in the regulation of the expression of the gene cluster that mediates the biosynthesis of calbistrins and related compounds such as decumbenones. Calbistrin A is a secondary metabolite with an interesting structure that was recently found to have bioactivity against leukemia cells. It consists of two polyketides linked by an ester bond: a bicyclic decalin containing polyketide and a linear 12 carbon dioic acid structure. The protein is Transcriptional regulator calD of Penicillium decumbens.